A 302-amino-acid chain; its full sequence is Probable WRKY transcription factor 40 (302 aa).

The WRKY DNA-binding region spans 140-206; that stretch reads DTTLVVKDGY…YEGEHNHPMP (67 aa).

It belongs to the WRKY group III family.

The protein localises to the nucleus. Transcription factor. Interacts specifically with the W box (5'-(T)TGAC[CT]-3'), a frequently occurring elicitor-responsive cis-acting element. The chain is Probable WRKY transcription factor 40 from Arabidopsis thaliana (Mouse-ear cress).